The sequence spans 598 residues: MSIFTQEVSAINGQSGNIKQMLTLEMLPELKSLLSDSVEQQICIDGILTLWIDKTQLIPALRLLKTLPQPFDLLLDLFGVDERLRLDKDKLPAQDFTLVYQLCSINRNQDIRLKVALANDQAEIPSITAFWPSANWYEREAWDMFGIIFSDHPNLYRLLLPPTFKGHPLRKEFPCRATETEAFSLDDERLAIEQEALKFDPKRWGMEQSNKDNDYLFLNLGPNHPSVHGVFRIALQLDGEHIINSVPDIGYHHRGAEKIAERQTWHGFIPYTDRIDYLGGVMNNFPYILAIEQLANIQVSERVKCIRVMLAECFRILSHMLFFGTFAQDVGQLSPIFYLFIDREKLFGIIEAITGARMHPSWFRIGGLAQDLPKGWDTMMQEFVDEFPKKLDEYEVMVMQNSILKRRSIGIGQYNTQEALDWNITGAGLRATGLEWDLRKARPYSGYENYDFEVPTGHKGDAYDRCQLRVEEMRQSVKIIQQCINNMPEGEVKADHPLTTPPSQRSKHDIETLIQHFLNVSWGPVMPKGESCFAVEATKGVNAYTIISDGSNTSYRTRIRTPSFAHLQMIPKMAKGLMVADLIVILASIDFVMADVDR.

An NADH dehydrogenase I subunit C region spans residues 1-190 (MSIFTQEVSA…EAFSLDDERL (190 aa)). The NADH dehydrogenase I subunit D stretch occupies residues 214-598 (DYLFLNLGPN…IDFVMADVDR (385 aa)).

The protein in the N-terminal section; belongs to the complex I 30 kDa subunit family. This sequence in the C-terminal section; belongs to the complex I 49 kDa subunit family. As to quaternary structure, NDH-1 is composed of 13 different subunits. Subunits NuoB, CD, E, F, and G constitute the peripheral sector of the complex.

Its subcellular location is the cell inner membrane. It catalyses the reaction a quinone + NADH + 5 H(+)(in) = a quinol + NAD(+) + 4 H(+)(out). NDH-1 shuttles electrons from NADH, via FMN and iron-sulfur (Fe-S) centers, to quinones in the respiratory chain. The immediate electron acceptor for the enzyme in this species is believed to be ubiquinone. Couples the redox reaction to proton translocation (for every two electrons transferred, four hydrogen ions are translocated across the cytoplasmic membrane), and thus conserves the redox energy in a proton gradient. This is NADH-quinone oxidoreductase subunit C/D from Shewanella woodyi (strain ATCC 51908 / MS32).